The primary structure comprises 156 residues: Small ribosomal subunit protein uS7 (156 aa).

The protein belongs to the universal ribosomal protein uS7 family. Part of the 30S ribosomal subunit. Contacts proteins S9 and S11.

Functionally, one of the primary rRNA binding proteins, it binds directly to 16S rRNA where it nucleates assembly of the head domain of the 30S subunit. Is located at the subunit interface close to the decoding center, probably blocks exit of the E-site tRNA. This Colwellia psychrerythraea (strain 34H / ATCC BAA-681) (Vibrio psychroerythus) protein is Small ribosomal subunit protein uS7.